The primary structure comprises 218 residues: Ribonuclease HII (218 aa).

Positions 12–206 constitute an RNase H type-2 domain; that stretch reads GRVAGVDEVG…VREALARSAL (195 aa). A divalent metal cation contacts are provided by D18, E19, and D115.

This sequence belongs to the RNase HII family. It depends on Mn(2+) as a cofactor. Mg(2+) is required as a cofactor.

It is found in the cytoplasm. It carries out the reaction Endonucleolytic cleavage to 5'-phosphomonoester.. Functionally, endonuclease that specifically degrades the RNA of RNA-DNA hybrids. This is Ribonuclease HII from Rhodospirillum rubrum (strain ATCC 11170 / ATH 1.1.1 / DSM 467 / LMG 4362 / NCIMB 8255 / S1).